The sequence spans 678 residues: THO complex subunit 5 homolog A (678 aa).

2 disordered regions span residues 1–35 and 294–329; these read MASD…YSEE and ALFK…VQLD. Positions 7–10 match the Nuclear localization signal motif; sequence KKRK. Residues 14-35 are compositionally biased toward basic and acidic residues; it reads NRNEDVKRGRHEDQEGRYYSEE. A compositionally biased stretch (acidic residues) spans 301–314; sequence DSQDDESDSDAEEE.

The protein belongs to the THOC5 family. In terms of assembly, component of the THO subcomplex, which is composed of thoc1, thoc2, thoc3, thoc5, thoc6 and thoc7. Component of the transcription/export (TREX) complex at least composed of alyref/thoc4, ddx39b, sarnp/cip29, chtop and the THO subcomplex. Interacts with thoc7.

The protein resides in the nucleus. It localises to the nucleus speckle. Its subcellular location is the cytoplasm. Component of the THO subcomplex of the TREX complex which is thought to couple mRNA transcription, processing and nuclear export, and which specifically associates with spliced mRNA and not with unspliced pre-mRNA. Plays a key structural role in the oligomerization of the THO-ddx39b complex. TREX is recruited to spliced mRNAs by a transcription-independent mechanism, binds to mRNA upstream of the exon-junction complex (EJC) and is recruited in a splicing- and cap-dependent manner to a region near the 5' end of the mRNA where it functions in mRNA export to the cytoplasm via the TAP/NXF1 pathway. May be involved in cell differentiation. The polypeptide is THO complex subunit 5 homolog A (thoc5-a) (Xenopus laevis (African clawed frog)).